A 213-amino-acid chain; its full sequence is Validoxylamine A 7'-phosphate phosphatase (213 aa).

Asp8 acts as the Nucleophile in catalysis. Positions 8 and 10 each coordinate a divalent metal cation. Residues 8–10 (DLD), 107–108 (TS), and Lys140 each bind substrate. The active-site Proton donor is the Asp10. Asp165 serves as a coordination point for a divalent metal cation.

It belongs to the HAD-like hydrolase superfamily. CbbY/CbbZ/Gph/YieH family. Mg(2+) serves as cofactor. Mn(2+) is required as a cofactor. It depends on Co(2+) as a cofactor.

The enzyme catalyses validoxylamine A 7'-phosphate + H2O = validoxylamine A + phosphate. Functionally, involved in the biosynthesis of the antifungal agent validamycin A. Catalyzes the dephosphorylation of validoxylamine A 7'-phosphate to yield validoxylamine A. VldH is also able to convert trehalose 6-phosphate to trehalose. In Streptomyces hygroscopicus subsp. limoneus, this protein is Validoxylamine A 7'-phosphate phosphatase.